A 280-amino-acid polypeptide reads, in one-letter code: MLLWPAPAKLNLFLHIIGRREDGYHLLQTAFQFVDYCDWLEFRPSADGRIEHLSPLPGVPVEHDLVYRAALLLQQRTACSQGVEVRIRKHLPMGGGLGGGSSDAATTLVALNHLWETGLSISQLAQLGLELGADVPVFIYGRAAWAEGVGEQLQPLELPEPWYLIVTPAVQVSTREVFIAPELTRDCKPMTISGLLAGEGENVCEPVVRGLYPVVADALDWLSQFSPARMTGTGSSIFAAFDGKSQALAALACMPSHWQGIVAKGCNYSLLLDCLEKTGC.

K9 is an active-site residue. 92 to 102 (PMGGGLGGGSS) is a binding site for ATP. Residue D134 is part of the active site.

This sequence belongs to the GHMP kinase family. IspE subfamily.

The catalysed reaction is 4-CDP-2-C-methyl-D-erythritol + ATP = 4-CDP-2-C-methyl-D-erythritol 2-phosphate + ADP + H(+). It participates in isoprenoid biosynthesis; isopentenyl diphosphate biosynthesis via DXP pathway; isopentenyl diphosphate from 1-deoxy-D-xylulose 5-phosphate: step 3/6. Its function is as follows. Catalyzes the phosphorylation of the position 2 hydroxy group of 4-diphosphocytidyl-2C-methyl-D-erythritol. The polypeptide is 4-diphosphocytidyl-2-C-methyl-D-erythritol kinase (Nitrosococcus oceani (strain ATCC 19707 / BCRC 17464 / JCM 30415 / NCIMB 11848 / C-107)).